The following is a 316-amino-acid chain: D-alanine--D-alanine ligase (316 aa).

Residues 109–304 (KRLWRGMDLP…FDEMVLQILA (196 aa)) form the ATP-grasp domain. Residue 135–190 (AADLGLPLIVKPAREGSSLGMMKVESIEALQSAYREAVIFDTAVFAERWLPGAEYT) coordinates ATP. Mg(2+)-binding residues include Asp-258, Glu-271, and Asn-273.

The protein belongs to the D-alanine--D-alanine ligase family. Requires Mg(2+) as cofactor. The cofactor is Mn(2+).

Its subcellular location is the cytoplasm. It catalyses the reaction 2 D-alanine + ATP = D-alanyl-D-alanine + ADP + phosphate + H(+). Its pathway is cell wall biogenesis; peptidoglycan biosynthesis. Cell wall formation. In Nitrosococcus oceani (strain ATCC 19707 / BCRC 17464 / JCM 30415 / NCIMB 11848 / C-107), this protein is D-alanine--D-alanine ligase.